We begin with the raw amino-acid sequence, 33 residues long: Cecropin-B (33 aa).

Residue lysine 21 is modified to 5-hydroxylysine.

As to quaternary structure, monomer. As to expression, hemolymph.

The protein localises to the secreted. Functionally, cecropins have lytic and antibacterial activity against several Gram-positive and Gram-negative bacteria. Also has activity against fungi. The chain is Cecropin-B from Heliothis virescens (Tobacco budworm moth).